A 1133-amino-acid chain; its full sequence is Protein TPR3 (1133 aa).

The region spanning 4–36 (LSRELVFLILQFLDEEKFKETVHKLEQESGFYF) is the LisH domain. The CTLH domain occupies 34 to 92 (FYFNMKYFEDEVINGNWDEVERYLGGFTKVDDNRYSMKIFFEIRKQKYLEALDKHDRSK). Positions 287–307 (PTTANPSMDYPSGDSDHVSKR) are disordered. WD repeat units lie at residues 348-388 (SQGS…RLVL), 410-449 (DPTV…DIRQ), 455-496 (AHVG…KQFT), 499-540 (GHEA…SRVD), 543-586 (APGH…VKRT), 590-629 (FRKR…LLTT), 634-673 (GGLP…RLLR), 771-810 (MRTS…RNSS), 837-875 (NPEE…TMTT), 878-918 (PPPP…VKSK), 921-960 (GHSK…KLKS), and 1014-1053 (ENSS…LQCR). The disordered stretch occupies residues 1099–1133 (ESERKWGNPPPAENGSTSALSTPPNGASSSDQPER). Over residues 1112–1133 (NGSTSALSTPPNGASSSDQPER) the composition is skewed to polar residues.

As to quaternary structure, tetramer. Interacts with D53. Interacts with MODD and HDAC1. Interacts with WOX1. Interacts with MOF1. As to expression, expressed in panicles, stems, leaves, spikelets and seed endosperm.

Its function is as follows. Probable downstream regulator of strigolactones signaling. Functions in a complex with MODD and HDAC1 to down-regulate the histone acetylation level at BZIP46 target genes. BZIP46 is a positive regulator of abscisic acid (ABA) signaling and drought stress tolerance. This is Protein TPR3 from Oryza sativa subsp. japonica (Rice).